We begin with the raw amino-acid sequence, 240 residues long: Ubiquinone biosynthesis O-methyltransferase (240 aa).

S-adenosyl-L-methionine-binding residues include R44, G64, D85, and M129.

Belongs to the methyltransferase superfamily. UbiG/COQ3 family.

The catalysed reaction is a 3-demethylubiquinol + S-adenosyl-L-methionine = a ubiquinol + S-adenosyl-L-homocysteine + H(+). It catalyses the reaction a 3-(all-trans-polyprenyl)benzene-1,2-diol + S-adenosyl-L-methionine = a 2-methoxy-6-(all-trans-polyprenyl)phenol + S-adenosyl-L-homocysteine + H(+). Its pathway is cofactor biosynthesis; ubiquinone biosynthesis. Functionally, O-methyltransferase that catalyzes the 2 O-methylation steps in the ubiquinone biosynthetic pathway. The chain is Ubiquinone biosynthesis O-methyltransferase from Escherichia coli O81 (strain ED1a).